The primary structure comprises 1547 residues: MSFMDQIPGGGNYPKLPVECLPNFPIQPSLTFRGRNDSHKLKNFISEIMLNMSMISWPNDASRIVYCRRHLLNPAAQWANDFVQEQGILEITFDTFIQGLYQHFYKPPDINKIFNAITQLSEAKLGIERLNQRFRKIWDRMPPDFMTEKAAIMTYTRLLTKETYNIVRMHKPETLKDAMEEAYQTTALTERFFPGFELDADGDTIIGATTHLQEEYDSDYDSEDNLTQNGYVHTVRTRRSYNKPMSNHRNRRNNNPSREECIKNRLCFYCKKEGHRLNECRARKAVLTDLELESKDQQTPFIKTLPIVHYIAIPEMDNTAEKTIKIQNTKVKTLFDSGSPTSFIRRDIVELLKYEIYETPPLRFRGFVATKSAVTSEAVTIDLKINDLHITLAAYILDNMDYQLLIGNPILRRYPKILHTVLNTRESPDSLKPKTYRSETVNNVRTYSAGNRGNPRNIKLSFAPTILEATDPKSAGNRGDSRTKTLSLATTTPAAIDPLTTLDNPGSTQSTFAQFPIPEEASILEEDGKYSNVVSTIQSVEPNATDHSNKDTFCTLPVWLQQKYREIIRNDLPPRPADINNIPVKHDIEIKPGARLPRLQPYHVTEKNEQEINKIVQKLLDNKFIVPSKSPCSSPVVLVPKKDGTFRLCVDYRTLNKATISDPFPLPRIDNLLSRIGNAQIFTTLDLHSGYHQIPMEPKDRYKTAFVTPSGKYEYTVMPFGLVNAPSTFARYMADTFRDLRFVNVYLDDILIFSESPEEHWKHLDTVLERLKNENLIVKKKKCKFASEETEFLGYSIGIQKIAPLQHKCAAIRDFPTPKTVKQAQRFLGMINYYRRFIPNCSKIAQPIQLFICDKSQWTEKQDKAIDKLKDALCNSPVLVPFNNKANYRLTTDASKDGIGAVLEEVDNKNKLVGVVGYFSKSLESAQKNYPAGELELLGIIKALHHFRYMLHGKHFTLRTDHISLLSLQNKNEPARRVQRWLDDLATYDFTLEYLAGPKNVVADAISRAVYTITPETSRPIDTESWKSYYKSDPLCSAVLIHMKELTQHNVTPEDMSAFRSYQKKLELSETFRKNYSLEDEMIYYQDRLVVPIKQQNAVMRLYHDHTLFGGHFGVTVTLAKISPIYYWPKLQHSIIQYIRTCVQCQLIKSHRPRLHGLLQPLPIAEGRWLDISMDFVTGLPPTSNNLNMILVVVDRFSKRAHFIATRKTLDATQLIDLLFRYIFSYHGFPRTITSDRDVRMTADKYQELTKRLGIKSTMSSANHPQTDGQSERTIQTLNRLLRAYASTNIQNWHVYLPQIEFVYNSTPTRTLGKSPFEIDLGYLPNTPAIKSDDEVNARSFTAVELAKHLKALTIQTKEQLEHAQIEMETNNNQRRKPLLLNIGDHVLVHRDAYFKKGAYMKVQQIYVGPFRVVKKINDNAYELDLNSHKKKHRVINVQFLKKFVYRPDAYPKNKPISSTERIKRAHEVTALIGIDTTHKTYLCHMQDVDPTLSVEYSEAEFCQIPERTRRSILANFRQLYETQDNPEREEDVVSQNEICQYDNTSP.

The residue at position 2 (Ser-2) is an N-acetylserine. The CCHC-type zinc finger occupies 265–282 (RLCFYCKKEGHRLNECRA). Catalysis depends on Asp-336, which acts as the For protease activity; shared with dimeric partner. Positions 620–797 (LDNKFIVPSK…EETEFLGYSI (178 aa)) constitute a Reverse transcriptase domain. 6 residues coordinate Mg(2+): Asp-686, Asp-748, Asp-749, Asp-893, Glu-936, and Asp-961. An RNase H Ty3/gyspy-type domain is found at 893–1011 (DASKDGIGAV…VADAISRAVY (119 aa)). The interval 1106 to 1145 (HTLFGGHFGVTVTLAKISPIYYWPKLQHSIIQYIRTCVQC) is integrase-type zinc finger-like. One can recognise an Integrase catalytic domain in the interval 1159–1324 (LQPLPIAEGR…SPFEIDLGYL (166 aa)). Mg(2+) is bound by residues Asp-1175 and Asp-1236.

As to quaternary structure, the protease is a homodimer, whose active site consists of two apposed aspartic acid residues. Initially, virus-like particles (VLPs) are composed of the structural unprocessed proteins Gag and Gag-Pol, and also contain the host initiator methionine tRNA (tRNA(i)-Met) which serves as a primer for minus-strand DNA synthesis, and a dimer of genomic Ty RNA. Processing of the polyproteins occurs within the particle and proceeds by an ordered pathway, called maturation. First, the protease (PR) is released by autocatalytic cleavage of the Gag-Pol polyprotein, and this cleavage is a prerequisite for subsequent processing at the remaining sites to release the mature structural and catalytic proteins. Maturation takes place prior to the RT reaction and is required to produce transposition-competent VLPs.

It localises to the cytoplasm. The protein resides in the nucleus. It carries out the reaction DNA(n) + a 2'-deoxyribonucleoside 5'-triphosphate = DNA(n+1) + diphosphate. The enzyme catalyses Endonucleolytic cleavage to 5'-phosphomonoester.. In terms of biological role, capsid protein (CA) is the structural component of the virus-like particle (VLP), forming the shell that encapsulates the genomic RNA-nucleocapsid complex. Nucleocapsid protein p11 (NC) forms the nucleocore that coats the retro-elements dimeric RNA. Binds these RNAs through its zinc fingers. Promotes primer tRNA(i)-Met annealing to the multipartite primer-binding site (PBS), dimerization of Ty3 RNA and initiation of reverse transcription. Functionally, the aspartyl protease (PR) mediates the proteolytic cleavages of the Gag and Gag-Pol polyproteins after assembly of the VLP. Its function is as follows. Reverse transcriptase/ribonuclease H (RT) is a multifunctional enzyme that catalyzes the conversion of the retro-elements RNA genome into dsDNA within the VLP. The enzyme displays a DNA polymerase activity that can copy either DNA or RNA templates, and a ribonuclease H (RNase H) activity that cleaves the RNA strand of RNA-DNA heteroduplexes during plus-strand synthesis and hydrolyzes RNA primers. The conversion leads to a linear dsDNA copy of the retrotransposon that includes long terminal repeats (LTRs) at both ends. In terms of biological role, integrase (IN) targets the VLP to the nucleus, where a subparticle preintegration complex (PIC) containing at least integrase and the newly synthesized dsDNA copy of the retrotransposon must transit the nuclear membrane. Once in the nucleus, integrase performs the integration of the dsDNA into the host genome. This is Transposon Ty3-G Gag-Pol polyprotein (TY3B-G) from Saccharomyces cerevisiae (strain ATCC 204508 / S288c) (Baker's yeast).